We begin with the raw amino-acid sequence, 503 residues long: Probable mitochondrial-processing peptidase subunit alpha-1, mitochondrial (503 aa).

Residues 1–59 (MYRTAASRARALKGVLTRSLRPARYASSSAVAETSSSTPAYLSWLSGGSRAALTSLDMP) constitute a mitochondrion transit peptide.

The protein belongs to the peptidase M16 family. Heterodimer of alpha and beta subunits, forming the mitochondrial processing protease (MPP) in which subunit alpha is involved in substrate recognition and binding and subunit beta is the catalytic subunit. Component of the ubiquinol-cytochrome c oxidoreductase (cytochrome b-c1 complex, complex III, CIII), a multisubunit enzyme composed of 10 subunits. The complex is composed of 3 respiratory subunits cytochrome b (MT-CYB), cytochrome c1 (CYC1-1 or CYC1-2) and Rieske protein (UCR1-1 or UCR1-2), 2 core protein subunits MPPalpha1 (or MPPalpha2) and MPPB, and 5 low-molecular weight protein subunits QCR7-1 (or QCR7-2), UCRQ-1 (or UCRQ-2), QCR9, UCRY and probably QCR6-1 (or QCR6-2). The complex exists as an obligatory dimer and forms supercomplexes (SCs) in the inner mitochondrial membrane with NADH-ubiquinone oxidoreductase (complex I, CI), resulting in different assemblies (supercomplexes SCI(1)III(2) and SCI(2)III(4)).

The protein localises to the mitochondrion matrix. It is found in the mitochondrion inner membrane. Its function is as follows. Substrate recognition and binding subunit of the essential mitochondrial processing protease (MPP), which cleaves the mitochondrial sequence off newly imported precursors proteins. Functionally, component of the ubiquinol-cytochrome c oxidoreductase, a multisubunit transmembrane complex that is part of the mitochondrial electron transport chain which drives oxidative phosphorylation. The respiratory chain contains 3 multisubunit complexes succinate dehydrogenase (complex II, CII), ubiquinol-cytochrome c oxidoreductase (cytochrome b-c1 complex, complex III, CIII) and cytochrome c oxidase (complex IV, CIV), that cooperate to transfer electrons derived from NADH and succinate to molecular oxygen, creating an electrochemical gradient over the inner membrane that drives transmembrane transport and the ATP synthase. The cytochrome b-c1 complex catalyzes electron transfer from ubiquinol to cytochrome c, linking this redox reaction to translocation of protons across the mitochondrial inner membrane, with protons being carried across the membrane as hydrogens on the quinol. In the process called Q cycle, 2 protons are consumed from the matrix, 4 protons are released into the intermembrane space and 2 electrons are passed to cytochrome c. The chain is Probable mitochondrial-processing peptidase subunit alpha-1, mitochondrial (MPPalpha1) from Arabidopsis thaliana (Mouse-ear cress).